Reading from the N-terminus, the 95-residue chain is MLHTLSCSPYHADLDTLLRGLDKGDALVLLQDGVIAALAGGNIIHRLLDSAVPLYALRPDVVARGMTEQISNSAVLIGYNEFVQLTVEHPQQLAW.

Belongs to the DsrH/TusB family. As to quaternary structure, heterohexamer, formed by a dimer of trimers. The hexameric TusBCD complex contains 2 copies each of TusB, TusC and TusD. The TusBCD complex interacts with TusE.

It is found in the cytoplasm. Its function is as follows. Part of a sulfur-relay system required for 2-thiolation of 5-methylaminomethyl-2-thiouridine (mnm(5)s(2)U) at tRNA wobble positions. The chain is Protein TusB from Pectobacterium carotovorum subsp. carotovorum (strain PC1).